A 30-amino-acid chain; its full sequence is Rothein 3.4 (30 aa).

Position 30 is a leucine amide (Leu-30).

It belongs to the frog skin active peptide (FSAP) family. Rothein subfamily. In terms of tissue distribution, expressed by the skin dorsal glands.

Its subcellular location is the secreted. In terms of biological role, lacks antimicrobial activity. Does not inhibit the formation of NO by neuronal nitric oxide. This Litoria rothii (Roth's tree frog) protein is Rothein 3.4.